The chain runs to 118 residues: Large ribosomal subunit protein bL20 (118 aa).

This sequence belongs to the bacterial ribosomal protein bL20 family.

Its function is as follows. Binds directly to 23S ribosomal RNA and is necessary for the in vitro assembly process of the 50S ribosomal subunit. It is not involved in the protein synthesizing functions of that subunit. The sequence is that of Large ribosomal subunit protein bL20 from Lacticaseibacillus casei (strain BL23) (Lactobacillus casei).